A 435-amino-acid chain; its full sequence is Exodeoxyribonuclease 7 large subunit (435 aa).

Positions 1-10 (MRGTRVTETA) are enriched in polar residues. 2 disordered regions span residues 1 to 21 (MRGT…GPPT) and 413 to 435 (AGKA…PRGK).

Belongs to the XseA family. Heterooligomer composed of large and small subunits.

It is found in the cytoplasm. The enzyme catalyses Exonucleolytic cleavage in either 5'- to 3'- or 3'- to 5'-direction to yield nucleoside 5'-phosphates.. Its function is as follows. Bidirectionally degrades single-stranded DNA into large acid-insoluble oligonucleotides, which are then degraded further into small acid-soluble oligonucleotides. This chain is Exodeoxyribonuclease 7 large subunit, found in Leifsonia xyli subsp. xyli (strain CTCB07).